A 160-amino-acid polypeptide reads, in one-letter code: Glyoxalase domain-containing protein 5 (160 aa).

Residues 33 to 153 (RLDHLVLTVR…DHNLIEVSNY (121 aa)) form the VOC domain.

The protein belongs to the glyoxalase I family.

This Xenopus laevis (African clawed frog) protein is Glyoxalase domain-containing protein 5 (glod5).